A 289-amino-acid polypeptide reads, in one-letter code: 5'-adenylylsulfate reductase-like 7 (289 aa).

The N-terminal stretch at 1–23 (MNLWVSIFLVSAIAGSCLPSGFA) is a signal peptide. In terms of domain architecture, Thioredoxin spans 37-157 (SVIEQKCPRS…LIQFYKETTG (121 aa)). Residues Asn132 and Asn184 are each glycosylated (N-linked (GlcNAc...) asparagine). A helical membrane pass occupies residues 198–218 (MVLALMFLSLKLAILIFPIMG).

The protein resides in the membrane. This Arabidopsis thaliana (Mouse-ear cress) protein is 5'-adenylylsulfate reductase-like 7 (APRL7).